The chain runs to 124 residues: T cell receptor beta variable 13 (124 aa).

The signal sequence occupies residues 1-31 (MLSPDLPDSAWNTRLLCRVMLCLLGAGSVAA). The region spanning 32–124 (GVIQSPRHLI…SALYFCASSL (93 aa)) is the Ig-like domain. A disulfide bond links C52 and C120. N-linked (GlcNAc...) asparagine glycosylation occurs at N106.

Alpha-beta TR is a heterodimer composed of an alpha and beta chain; disulfide-linked. The alpha-beta TR is associated with the transmembrane signaling CD3 coreceptor proteins to form the TR-CD3 (TcR or TCR). The assembly of alpha-beta TR heterodimers with CD3 occurs in the endoplasmic reticulum where a single alpha-beta TR heterodimer associates with one CD3D-CD3E heterodimer, one CD3G-CD3E heterodimer and one CD247 homodimer forming a stable octameric structure. CD3D-CD3E and CD3G-CD3E heterodimers preferentially associate with TR alpha and TR beta chains, respectively. The association of the CD247 homodimer is the last step of TcR assembly in the endoplasmic reticulum and is required for transport to the cell surface.

The protein localises to the cell membrane. Functionally, v region of the variable domain of T cell receptor (TR) beta chain that participates in the antigen recognition. Alpha-beta T cell receptors are antigen specific receptors which are essential to the immune response and are present on the cell surface of T lymphocytes. Recognize peptide-major histocompatibility (MH) (pMH) complexes that are displayed by antigen presenting cells (APC), a prerequisite for efficient T cell adaptive immunity against pathogens. Binding of alpha-beta TR to pMH complex initiates TR-CD3 clustering on the cell surface and intracellular activation of LCK that phosphorylates the ITAM motifs of CD3G, CD3D, CD3E and CD247 enabling the recruitment of ZAP70. In turn ZAP70 phosphorylates LAT, which recruits numerous signaling molecules to form the LAT signalosome. The LAT signalosome propagates signal branching to three major signaling pathways, the calcium, the mitogen-activated protein kinase (MAPK) kinase and the nuclear factor NF-kappa-B (NF-kB) pathways, leading to the mobilization of transcription factors that are critical for gene expression and essential for T cell growth and differentiation. The T cell repertoire is generated in the thymus, by V-(D)-J rearrangement. This repertoire is then shaped by intrathymic selection events to generate a peripheral T cell pool of self-MH restricted, non-autoaggressive T cells. Post-thymic interaction of alpha-beta TR with the pMH complexes shapes TR structural and functional avidity. This chain is T cell receptor beta variable 13, found in Homo sapiens (Human).